Consider the following 66-residue polypeptide: MRLFILLSCLLAWVLAAPYIDQEDALRVLNAYLEQFGPGSDRVYYVAEDDHGSMKRGLGPRPLRFG.

The first 16 residues, 1-16 (MRLFILLSCLLAWVLA), serve as a signal peptide directing secretion.

Belongs to the FARP (FMRFamide related peptide) family. In terms of processing, may be processed by convertase egl-3. Expressed in the ADL, ASE and ASH sensory neurons, the URA motor neurons and the MC, M2 and M4 pharyngeal neurons.

Its subcellular location is the secreted. FMRFamide-like neuropeptide. Involved in modulating locomotion quiescence during the sleep-like state called lethargus which occurs during molting between larval and adult stages, acting via the G-protein coupled receptor npr-1. Plays a role in modulating social and feeding behavior. In terms of biological role, ligand to G-protein coupled receptor npr-1. The sequence is that of FMRFamide-like neuropeptide 21 from Caenorhabditis elegans.